Reading from the N-terminus, the 339-residue chain is Serpentine receptor class gamma-7 (339 aa).

A run of 7 helical transmembrane segments spans residues 30–50, 65–85, 98–118, 152–172, 200–220, 239–259, and 268–288; these read YWIQCLWLIPTLFLLVWIIIT, WILTADCVVSIILILLDLFVV, FSTIFINYPIISDIYFPIYNY, IPLFLTIICILPILVVWNTVI, LHLTFIFVSISFILISSLLLM, SIFIIVAFFFQAAFQSFYAFF, and FLVDFQFIIYDVMTVGYPLIF. A disordered region spans residues 319–339; it reads PFNNTMPRQESPSPNYDSILA.

This sequence belongs to the nematode receptor-like protein srg family.

It localises to the membrane. In Caenorhabditis elegans, this protein is Serpentine receptor class gamma-7 (srg-7).